Reading from the N-terminus, the 119-residue chain is Large ribosomal subunit protein bL20 (119 aa).

The protein belongs to the bacterial ribosomal protein bL20 family.

Its function is as follows. Binds directly to 23S ribosomal RNA and is necessary for the in vitro assembly process of the 50S ribosomal subunit. It is not involved in the protein synthesizing functions of that subunit. This is Large ribosomal subunit protein bL20 from Shouchella clausii (strain KSM-K16) (Alkalihalobacillus clausii).